The following is a 313-amino-acid chain: Acetyl-coenzyme A carboxylase carboxyl transferase subunit alpha (313 aa).

Residues 36–286 (RLDKEVKTIY…KEYFLDTLRT (251 aa)) enclose the CoA carboxyltransferase C-terminal domain.

This sequence belongs to the AccA family. In terms of assembly, acetyl-CoA carboxylase is a heterohexamer composed of biotin carboxyl carrier protein (AccB), biotin carboxylase (AccC) and two subunits each of ACCase subunit alpha (AccA) and ACCase subunit beta (AccD).

Its subcellular location is the cytoplasm. It carries out the reaction N(6)-carboxybiotinyl-L-lysyl-[protein] + acetyl-CoA = N(6)-biotinyl-L-lysyl-[protein] + malonyl-CoA. It functions in the pathway lipid metabolism; malonyl-CoA biosynthesis; malonyl-CoA from acetyl-CoA: step 1/1. Component of the acetyl coenzyme A carboxylase (ACC) complex. First, biotin carboxylase catalyzes the carboxylation of biotin on its carrier protein (BCCP) and then the CO(2) group is transferred by the carboxyltransferase to acetyl-CoA to form malonyl-CoA. The polypeptide is Acetyl-coenzyme A carboxylase carboxyl transferase subunit alpha (Helicobacter acinonychis (strain Sheeba)).